Here is a 461-residue protein sequence, read N- to C-terminus: Ornithine decarboxylase (461 aa).

Lysine 69 is subject to N6-(pyridoxal phosphate)lysine. Residues serine 200, glycine 237, and 274–277 (EPGR) each bind pyridoxal 5'-phosphate. Position 303 is a phosphoserine; by CK2 (serine 303). 331-332 (YD) lines the substrate pocket. Cysteine 360 functions as the Proton donor; shared with dimeric partner in the catalytic mechanism. S-nitrosocysteine is present on cysteine 360. Residue aspartate 361 participates in substrate binding. Tyrosine 389 lines the pyridoxal 5'-phosphate pocket.

Belongs to the Orn/Lys/Arg decarboxylase class-II family. In terms of assembly, homodimer. Only the dimer is catalytically active, as the active sites are constructed of residues from both monomers. Does not form a heterodimer with AZIN2. It depends on pyridoxal 5'-phosphate as a cofactor. In terms of tissue distribution, expressed during testis development in the outer part of the seminiferous tubules.

It carries out the reaction L-ornithine + H(+) = putrescine + CO2. It functions in the pathway amine and polyamine biosynthesis; putrescine biosynthesis via L-ornithine pathway; putrescine from L-ornithine: step 1/1. Inhibited by antizymes (AZs) OAZ1, OAZ2 and OAZ3 in response to polyamine levels. AZs inhibit the assembly of the functional homodimer by binding to ODC monomers. Additionally, OAZ1 targets ODC monomers for ubiquitin-independent proteolytic destruction by the 26S proteasome. Catalyzes the first and rate-limiting step of polyamine biosynthesis that converts ornithine into putrescine, which is the precursor for the polyamines, spermidine and spermine. Polyamines are essential for cell proliferation and are implicated in cellular processes, ranging from DNA replication to apoptosis. The chain is Ornithine decarboxylase (Odc1) from Mus musculus (Mouse).